The following is a 404-amino-acid chain: Putative CBL-interacting protein kinase 27 (404 aa).

A Protein kinase domain is found at 11–266 (YEMGRVLGHG…VAGLLETPWF (256 aa)). Residues 17-25 (LGHGNFGRV) and Lys40 contribute to the ATP site. Catalysis depends on Asp134, which acts as the Proton acceptor. The tract at residues 152–181 (DFGLSALACHARPDGLLHTACGTPAYVAPE) is activation loop. The NAF domain maps to 294–321 (DKDEPPEVLNAFHLISLSEGFDLSPLFE). Positions 335–356 (AGGTRFATREAASGVVARLEAL) are PPI.

This sequence belongs to the protein kinase superfamily. CAMK Ser/Thr protein kinase family. SNF1 subfamily. It depends on Mn(2+) as a cofactor.

It carries out the reaction L-seryl-[protein] + ATP = O-phospho-L-seryl-[protein] + ADP + H(+). It catalyses the reaction L-threonyl-[protein] + ATP = O-phospho-L-threonyl-[protein] + ADP + H(+). CIPK serine-threonine protein kinases interact with CBL proteins. Binding of a CBL protein to the regulatory NAF domain of CIPK protein lead to the activation of the kinase in a calcium-dependent manner. This is Putative CBL-interacting protein kinase 27 (CIPK27) from Oryza sativa subsp. japonica (Rice).